Here is a 651-residue protein sequence, read N- to C-terminus: Probable potassium transport system protein Kup (651 aa).

12 helical membrane passes run 41-61, 82-102, 130-150, 163-183, 194-214, 235-255, 276-296, 309-329, 366-386, 395-415, 426-446, and 450-470; these read LVLG…IYAF, VVSL…VLFV, LILG…VITP, IVAP…LVTL, VAIV…ASGL, FLTV…LAMT, WLWI…AFIL, MIPS…TVIA, IYIP…VLGF, AYGI…YIVM, ALPI…ANII, and EGGW…WTWV.

The protein belongs to the HAK/KUP transporter (TC 2.A.72) family.

The protein resides in the cell inner membrane. It carries out the reaction K(+)(in) + H(+)(in) = K(+)(out) + H(+)(out). Transport of potassium into the cell. Likely operates as a K(+):H(+) symporter. This is Probable potassium transport system protein Kup from Brucella melitensis biotype 1 (strain ATCC 23456 / CCUG 17765 / NCTC 10094 / 16M).